A 468-amino-acid chain; its full sequence is Tissue alpha-L-fucosidase (468 aa).

Residues M1–S29 form the signal peptide. T172 bears the Phosphothreonine mark. 3 N-linked (GlcNAc...) asparagine glycosylation sites follow: N243, N270, and N384.

Belongs to the glycosyl hydrolase 29 family. Homotetramer.

The protein resides in the lysosome. The catalysed reaction is an alpha-L-fucoside + H2O = L-fucose + an alcohol. It catalyses the reaction a neolactoside IV(2)-alpha-Fuc-nLc4Cer(d18:1(4E)) + H2O = a neolactoside nLc4Cer(d18:1(4E)) + L-fucose. The enzyme catalyses a neolactoside IV(2)-alpha-Fuc-nLc4Cer(d18:0) + H2O = a neolactoside nLc4Cer(d18:0) + L-fucose. In terms of biological role, alpha-L-fucosidase is responsible for hydrolyzing the alpha-1,6-linked fucose joined to the reducing-end N-acetylglucosamine of the carbohydrate moieties of glycoproteins. This Macaca fascicularis (Crab-eating macaque) protein is Tissue alpha-L-fucosidase (FUCA1).